A 276-amino-acid polypeptide reads, in one-letter code: C-type lectin domain family 12 member B (276 aa).

Over 1-43 (MSEEVTYATLTFQDSAGARNNRDGNNLRKRGHPAPSPIWRHAA) the chain is Cytoplasmic. The ITIM motif motif lies at 5-10 (VTYATL). Tyr7 is modified (phosphotyrosine). A helical; Signal-anchor for type II membrane protein transmembrane segment spans residues 44–64 (LGLVTLCLMLLIGLVTLGMMF). At 65-276 (LQISNDINSD…AAPVKTEDLD (212 aa)) the chain is on the extracellular side. N-linked (GlcNAc...) asparagine glycosylation is found at Asn91, Asn176, and Asn237. The C-type lectin domain maps to 150–264 (YQNSCYYFTT…CSAEIFWICE (115 aa)). 2 disulfide bridges follow: Cys172-Cys263 and Cys242-Cys255.

Homodimer. Interacts (via ITIM motif) with PTPN6. Interacts (via ITIM motif) with PTPN11; this interaction triggers dephosphorylation and activation of PTPN11. N-glycosylated. In terms of tissue distribution, detected in colon, heart, kidney, liver, lung, mammary gland, ovary, spleen and testis. Expressed in melanocytes (at protein level).

The protein resides in the cell membrane. Its function is as follows. Inhibitory receptor postulated to negatively regulate immune and non-immune functions. Upon phosphorylation, recruits SH2 domain-containing PTPN6 and PTPN11 phosphatases to its ITIM motif and antagonizes activation signals. Although it inhibits KLRK1/NKG2D-mediated signaling, it does not bind known ligands of KLRK1/NKG2D and therefore is not its inhibitory counterpart. May limit activation of myeloid cell subsets in response to infection or tissue inflammation. May protect target cells against natural killer cell-mediated lysis. May negatively regulate cell cycle and differentiation of melanocytes via inactivation of STAT3. The chain is C-type lectin domain family 12 member B from Homo sapiens (Human).